Here is a 475-residue protein sequence, read N- to C-terminus: Ribulose bisphosphate carboxylase large chain (475 aa).

A propeptide spanning residues 1-2 (MS) is cleaved from the precursor. Pro3 is modified (N-acetylproline). Residue Lys14 is modified to N6,N6,N6-trimethyllysine. Asn123 and Thr173 together coordinate substrate. Lys175 (proton acceptor) is an active-site residue. Lys177 provides a ligand contact to substrate. Lys201, Asp203, and Glu204 together coordinate Mg(2+). At Lys201 the chain carries N6-carboxylysine. Residue His294 is the Proton acceptor of the active site. Substrate-binding residues include Arg295, His327, and Ser379.

Belongs to the RuBisCO large chain family. Type I subfamily. As to quaternary structure, heterohexadecamer of 8 large chains and 8 small chains; disulfide-linked. The disulfide link is formed within the large subunit homodimers. The cofactor is Mg(2+). In terms of processing, the disulfide bond which can form in the large chain dimeric partners within the hexadecamer appears to be associated with oxidative stress and protein turnover.

It is found in the plastid. The protein resides in the chloroplast. It carries out the reaction 2 (2R)-3-phosphoglycerate + 2 H(+) = D-ribulose 1,5-bisphosphate + CO2 + H2O. It catalyses the reaction D-ribulose 1,5-bisphosphate + O2 = 2-phosphoglycolate + (2R)-3-phosphoglycerate + 2 H(+). In terms of biological role, ruBisCO catalyzes two reactions: the carboxylation of D-ribulose 1,5-bisphosphate, the primary event in carbon dioxide fixation, as well as the oxidative fragmentation of the pentose substrate in the photorespiration process. Both reactions occur simultaneously and in competition at the same active site. This chain is Ribulose bisphosphate carboxylase large chain, found in Pinus longaeva (Great Basin bristlecone pine).